A 252-amino-acid chain; its full sequence is Probable transcriptional regulatory protein Moth_1704 (252 aa).

The protein belongs to the TACO1 family.

It is found in the cytoplasm. The protein is Probable transcriptional regulatory protein Moth_1704 of Moorella thermoacetica (strain ATCC 39073 / JCM 9320).